The chain runs to 175 residues: Bifunctional protein PyrR (175 aa).

Positions 98-110 match the PRPP-binding motif; sequence VIIIDDVLYTGRT.

The protein belongs to the purine/pyrimidine phosphoribosyltransferase family. PyrR subfamily. Homodimer and homohexamer; in equilibrium.

It catalyses the reaction UMP + diphosphate = 5-phospho-alpha-D-ribose 1-diphosphate + uracil. Its function is as follows. Regulates transcriptional attenuation of the pyrimidine nucleotide (pyr) operon by binding in a uridine-dependent manner to specific sites on pyr mRNA. This disrupts an antiterminator hairpin in the RNA and favors formation of a downstream transcription terminator, leading to a reduced expression of downstream genes. Functionally, also displays a weak uracil phosphoribosyltransferase activity which is not physiologically significant. This Staphylococcus aureus (strain bovine RF122 / ET3-1) protein is Bifunctional protein PyrR.